Consider the following 415-residue polypeptide: Multifunctional CCA protein (415 aa).

ATP-binding residues include glycine 8 and arginine 11. CTP-binding residues include glycine 8 and arginine 11. Mg(2+)-binding residues include glutamate 21 and aspartate 23. The ATP site is built by arginine 91, arginine 137, and arginine 140. CTP-binding residues include arginine 91, arginine 137, and arginine 140. In terms of domain architecture, HD spans 228–329 (AGTHTLMALD…VELFEGLDLF (102 aa)).

Belongs to the tRNA nucleotidyltransferase/poly(A) polymerase family. Bacterial CCA-adding enzyme type 1 subfamily. Monomer. Can also form homodimers and oligomers. Requires Mg(2+) as cofactor. Ni(2+) serves as cofactor.

The catalysed reaction is a tRNA precursor + 2 CTP + ATP = a tRNA with a 3' CCA end + 3 diphosphate. It catalyses the reaction a tRNA with a 3' CCA end + 2 CTP + ATP = a tRNA with a 3' CCACCA end + 3 diphosphate. Functionally, catalyzes the addition and repair of the essential 3'-terminal CCA sequence in tRNAs without using a nucleic acid template. Adds these three nucleotides in the order of C, C, and A to the tRNA nucleotide-73, using CTP and ATP as substrates and producing inorganic pyrophosphate. tRNA 3'-terminal CCA addition is required both for tRNA processing and repair. Also involved in tRNA surveillance by mediating tandem CCA addition to generate a CCACCA at the 3' terminus of unstable tRNAs. While stable tRNAs receive only 3'-terminal CCA, unstable tRNAs are marked with CCACCA and rapidly degraded. The chain is Multifunctional CCA protein from Halorhodospira halophila (strain DSM 244 / SL1) (Ectothiorhodospira halophila (strain DSM 244 / SL1)).